The sequence spans 275 residues: Dermonecrotic toxin SpeSicTox-betaIIA2v (275 aa).

Histidine 5 is a catalytic residue. Mg(2+) contacts are provided by glutamate 25 and aspartate 27. Catalysis depends on histidine 41, which acts as the Nucleophile. 2 disulfide bridges follow: cysteine 45/cysteine 51 and cysteine 47/cysteine 190. Aspartate 85 lines the Mg(2+) pocket.

Belongs to the arthropod phospholipase D family. Class II subfamily. The cofactor is Mg(2+). As to expression, expressed by the venom gland.

The protein localises to the secreted. The enzyme catalyses an N-(acyl)-sphingosylphosphocholine = an N-(acyl)-sphingosyl-1,3-cyclic phosphate + choline. It catalyses the reaction an N-(acyl)-sphingosylphosphoethanolamine = an N-(acyl)-sphingosyl-1,3-cyclic phosphate + ethanolamine. It carries out the reaction a 1-acyl-sn-glycero-3-phosphocholine = a 1-acyl-sn-glycero-2,3-cyclic phosphate + choline. The catalysed reaction is a 1-acyl-sn-glycero-3-phosphoethanolamine = a 1-acyl-sn-glycero-2,3-cyclic phosphate + ethanolamine. In terms of biological role, dermonecrotic toxins cleave the phosphodiester linkage between the phosphate and headgroup of certain phospholipids (sphingolipid and lysolipid substrates), forming an alcohol (often choline) and a cyclic phosphate. This toxin acts on sphingomyelin (SM). It may also act on ceramide phosphoethanolamine (CPE), lysophosphatidylcholine (LPC) and lysophosphatidylethanolamine (LPE), but not on lysophosphatidylserine (LPS), and lysophosphatidylglycerol (LPG). It acts by transphosphatidylation, releasing exclusively cyclic phosphate products as second products. Induces dermonecrosis, hemolysis, increased vascular permeability, edema, inflammatory response, and platelet aggregation. This Sicarius peruensis (Six-eyed sand spider) protein is Dermonecrotic toxin SpeSicTox-betaIIA2v.